We begin with the raw amino-acid sequence, 708 residues long: Killer toxin KHS (708 aa).

An N-terminal signal peptide occupies residues 1–27 (MPRFAIIFALLIAYSLFLSTLFTGSIP). A propeptide spanning residues 28 to 36 (DRANTVTSN) is cleaved from the precursor. Helical transmembrane passes span 77-97 (VCTIAGAVLATAAVIVAAVLV), 380-400 (IMMKITIFISKGNLWSIIYVI), and 466-486 (NIIYIYNSIHITCGAVYVIVH).

This sequence to yeast YER187w. Monomer.

The protein resides in the cell membrane. Functionally, kills sensitive strains of yeast. The chain is Killer toxin KHS (KHS1) from Saccharomyces cerevisiae (Baker's yeast).